Reading from the N-terminus, the 254-residue chain is Allene oxide cyclase 1, chloroplastic (254 aa).

A chloroplast-targeting transit peptide spans 1 to 78 (MASSTISLQS…QNLGNTENPR (78 aa)). A compositionally biased stretch (low complexity) spans 44–56 (SNGPGSSSPTSFT). A disordered region spans residues 44–79 (SNGPGSSSPTSFTPKKKLTPTRALSQNLGNTENPRP). Residues 65 to 77 (RALSQNLGNTENP) show a composition bias toward polar residues.

The protein belongs to the allene oxide cyclase family. Highly expressed in fully developed leaves.

Its subcellular location is the plastid. It is found in the chloroplast. The catalysed reaction is (9Z,13S,15Z)-12,13-epoxyoctadeca-9,11,15-trienoate = (9S,13S,15Z)-12-oxophyto-10,15-dienoate. Involved in the production of 12-oxo-phytodienoic acid (OPDA), a precursor of jasmonic acid. This Arabidopsis thaliana (Mouse-ear cress) protein is Allene oxide cyclase 1, chloroplastic (AOC1).